The following is a 276-amino-acid chain: Small ribosomal subunit protein uS3 (276 aa).

The KH type-2 domain maps to 39-110; sequence IRRETMKFLK…KINIKIKEIK (72 aa).

This sequence belongs to the universal ribosomal protein uS3 family. As to quaternary structure, part of the 30S ribosomal subunit. Forms a tight complex with proteins S10 and S14.

Its function is as follows. Binds the lower part of the 30S subunit head. Binds mRNA in the 70S ribosome, positioning it for translation. In Borrelia recurrentis (strain A1), this protein is Small ribosomal subunit protein uS3.